The primary structure comprises 201 residues: 3-isopropylmalate dehydratase small subunit (201 aa).

This sequence belongs to the LeuD family. LeuD type 1 subfamily. As to quaternary structure, heterodimer of LeuC and LeuD.

The enzyme catalyses (2R,3S)-3-isopropylmalate = (2S)-2-isopropylmalate. It participates in amino-acid biosynthesis; L-leucine biosynthesis; L-leucine from 3-methyl-2-oxobutanoate: step 2/4. Catalyzes the isomerization between 2-isopropylmalate and 3-isopropylmalate, via the formation of 2-isopropylmaleate. The chain is 3-isopropylmalate dehydratase small subunit from Brucella anthropi (strain ATCC 49188 / DSM 6882 / CCUG 24695 / JCM 21032 / LMG 3331 / NBRC 15819 / NCTC 12168 / Alc 37) (Ochrobactrum anthropi).